The chain runs to 214 residues: Probable transaldolase (214 aa).

The active-site Schiff-base intermediate with substrate is the lysine 83.

It belongs to the transaldolase family. Type 3B subfamily.

The protein localises to the cytoplasm. It carries out the reaction D-sedoheptulose 7-phosphate + D-glyceraldehyde 3-phosphate = D-erythrose 4-phosphate + beta-D-fructose 6-phosphate. Its pathway is carbohydrate degradation; pentose phosphate pathway; D-glyceraldehyde 3-phosphate and beta-D-fructose 6-phosphate from D-ribose 5-phosphate and D-xylulose 5-phosphate (non-oxidative stage): step 2/3. Its function is as follows. Transaldolase is important for the balance of metabolites in the pentose-phosphate pathway. This Geotalea daltonii (strain DSM 22248 / JCM 15807 / FRC-32) (Geobacter daltonii) protein is Probable transaldolase.